The chain runs to 444 residues: UDP-N-acetylmuramate--L-alanine ligase (444 aa).

111–117 is a binding site for ATP; sequence GAHGKTS.

Belongs to the MurCDEF family.

It is found in the cytoplasm. It carries out the reaction UDP-N-acetyl-alpha-D-muramate + L-alanine + ATP = UDP-N-acetyl-alpha-D-muramoyl-L-alanine + ADP + phosphate + H(+). Its pathway is cell wall biogenesis; peptidoglycan biosynthesis. Cell wall formation. This is UDP-N-acetylmuramate--L-alanine ligase from Leuconostoc mesenteroides subsp. mesenteroides (strain ATCC 8293 / DSM 20343 / BCRC 11652 / CCM 1803 / JCM 6124 / NCDO 523 / NBRC 100496 / NCIMB 8023 / NCTC 12954 / NRRL B-1118 / 37Y).